The following is a 146-amino-acid chain: D-aminoacyl-tRNA deacylase (146 aa).

The Gly-cisPro motif, important for rejection of L-amino acids motif lies at 138 to 139 (GP).

This sequence belongs to the DTD family. As to quaternary structure, homodimer.

It is found in the cytoplasm. It carries out the reaction glycyl-tRNA(Ala) + H2O = tRNA(Ala) + glycine + H(+). The catalysed reaction is a D-aminoacyl-tRNA + H2O = a tRNA + a D-alpha-amino acid + H(+). Its function is as follows. An aminoacyl-tRNA editing enzyme that deacylates mischarged D-aminoacyl-tRNAs. Also deacylates mischarged glycyl-tRNA(Ala), protecting cells against glycine mischarging by AlaRS. Acts via tRNA-based rather than protein-based catalysis; rejects L-amino acids rather than detecting D-amino acids in the active site. By recycling D-aminoacyl-tRNA to D-amino acids and free tRNA molecules, this enzyme counteracts the toxicity associated with the formation of D-aminoacyl-tRNA entities in vivo and helps enforce protein L-homochirality. This is D-aminoacyl-tRNA deacylase from Xanthomonas euvesicatoria pv. vesicatoria (strain 85-10) (Xanthomonas campestris pv. vesicatoria).